The chain runs to 348 residues: Outer membrane protein A (348 aa).

Residues 1-21 (MKKTAIAIAVALAGFATVAQA) form the signal peptide. The next 8 membrane-spanning stretches (beta stranded) occupy residues 27-37 (TWYTGAKLGWS), 55-66 (QLGAGAFGGYQV), 70-78 (VGFEMGYDW), 96-107 (QGVQLTAKLGYP), 112-120 (LDIYTRLGG), 146-155 (PVFAGGVEYA), 160-167 (IATRLEYQ), and 186-194 (LLSLGVSYR). The interval 201-210 (APVVAPAPAP) is hinge-like. 3 repeat units span residues 205 to 206 (AP), 207 to 208 (AP), and 209 to 210 (AP). The tract at residues 205-210 (APAPAP) is 3 X 2 AA tandem repeats of A-P. The OmpA-like domain maps to 212–340 (VQTKHFTLKS…RVEIEVKGIK (129 aa)). Cys313 and Cys325 form a disulfide bridge.

This sequence belongs to the outer membrane OOP (TC 1.B.6) superfamily. OmpA family. In terms of assembly, monomer and homodimer. (Microbial infection) Upon infection with phage Sf6 associates with the mature bacteriophage capsid. Was originally suggested to be within the bacteriophage capsid. This has been disproven.

Its subcellular location is the extracellular vesicle. The protein resides in the cell outer membrane. Its function is as follows. With TolR probably plays a role in maintaining the position of the peptidoglycan cell wall in the periplasm. Acts as a porin with low permeability that allows slow penetration of small solutes; an internal gate slows down solute passage. In terms of biological role, required for conjugation with F-type plasmids; probably serves as the mating receptor on recipient cells. (Microbial infection) Serves as a secondary receptor during phage Sf6 infection; infection requires both lipopolysaccharide (LPS) and the OmpA beta-barrel. This chain is Outer membrane protein A, found in Shigella flexneri.